The chain runs to 526 residues: GMP synthase [glutamine-hydrolyzing] (526 aa).

One can recognise a Glutamine amidotransferase type-1 domain in the interval arginine 9–leucine 208. The Nucleophile role is filled by cysteine 86. Residues histidine 182 and glutamate 184 contribute to the active site. The 193-residue stretch at tryptophan 209–arginine 401 folds into the GMPS ATP-PPase domain. ATP is bound at residue serine 236–serine 242.

Homodimer.

It catalyses the reaction XMP + L-glutamine + ATP + H2O = GMP + L-glutamate + AMP + diphosphate + 2 H(+). It participates in purine metabolism; GMP biosynthesis; GMP from XMP (L-Gln route): step 1/1. Its function is as follows. Catalyzes the synthesis of GMP from XMP. The protein is GMP synthase [glutamine-hydrolyzing] of Aeromonas salmonicida (strain A449).